The primary structure comprises 250 residues: Probable cytokinin riboside 5'-monophosphate phosphoribohydrolase LOGL6 (250 aa).

Residues glutamate 98, 116-117 (RK), and 133-139 (GYGTLEE) contribute to the substrate site.

Belongs to the LOG family. As to expression, expressed in roots, leaves, stems, tiller buds, shoot apex, immature inflorescences and flowers.

The enzyme catalyses N(6)-(dimethylallyl)adenosine 5'-phosphate + H2O = N(6)-dimethylallyladenine + D-ribose 5-phosphate. The catalysed reaction is 9-ribosyl-trans-zeatin 5'-phosphate + H2O = trans-zeatin + D-ribose 5-phosphate. In terms of biological role, cytokinin-activating enzyme working in the direct activation pathway. Phosphoribohydrolase that converts inactive cytokinin nucleotides to the biologically active free-base forms. The chain is Probable cytokinin riboside 5'-monophosphate phosphoribohydrolase LOGL6 (LOGL6) from Oryza sativa subsp. japonica (Rice).